Consider the following 321-residue polypeptide: MVYSDSHLKLFALNSNPGLAEKISQFTGVPLGKLSSKQFSDGEIMINMEESVRSQDIFIVQSTSCPVNDHLWELLIMIDACKRASARTINVVIPYFGYARQDRTATSREPITAKLVADMIVKAGADRLLTLDIHAVQVQGFFDIPVDNLFTVPLFADYYRKSGLFGDDVIVVAPKNSGIKRARSLAEYLESAIAIVDYEDDDKNRENGYVIGNVSGKKVILIDDILNTGVTFANAANVVREAGASEIYAVASHGLFTSGAADVLEKVDIKEILVTDSVVTNHRKPLNVKYLSAAEYLASAILRIHEGRPVSPLFEHEKPQD.

Residues 41 to 43 (DGE) and 100 to 101 (RQ) each bind ATP. His134 is a binding site for Mg(2+). D-ribose 5-phosphate contacts are provided by residues Asp223 and 227 to 231 (NTGVT).

It belongs to the ribose-phosphate pyrophosphokinase family. Class I subfamily. In terms of assembly, homohexamer. The cofactor is Mg(2+).

It is found in the cytoplasm. It carries out the reaction D-ribose 5-phosphate + ATP = 5-phospho-alpha-D-ribose 1-diphosphate + AMP + H(+). It functions in the pathway metabolic intermediate biosynthesis; 5-phospho-alpha-D-ribose 1-diphosphate biosynthesis; 5-phospho-alpha-D-ribose 1-diphosphate from D-ribose 5-phosphate (route I): step 1/1. In terms of biological role, involved in the biosynthesis of the central metabolite phospho-alpha-D-ribosyl-1-pyrophosphate (PRPP) via the transfer of pyrophosphoryl group from ATP to 1-hydroxyl of ribose-5-phosphate (Rib-5-P). The polypeptide is Putative ribose-phosphate pyrophosphokinase 2 (Lactococcus lactis subsp. lactis (strain IL1403) (Streptococcus lactis)).